Here is a 115-residue protein sequence, read N- to C-terminus: Na(+)/H(+) antiporter subunit C1 (115 aa).

The next 3 membrane-spanning stretches (helical) occupy residues 1–21, 28–48, and 72–92; these read MEII…YLVL, IIMG…TMGG, and LILT…VLAF.

This sequence belongs to the CPA3 antiporters (TC 2.A.63) subunit C family. May form a heterooligomeric complex that consists of seven subunits: mnhA1, mnhB1, mnhC1, mnhD1, mnhE1, mnhF1 and mnhG1.

The protein localises to the cell membrane. Mnh complex is a Na(+)/H(+) antiporter involved in Na(+) excretion. This is Na(+)/H(+) antiporter subunit C1 (mnhC1) from Staphylococcus epidermidis (strain ATCC 35984 / DSM 28319 / BCRC 17069 / CCUG 31568 / BM 3577 / RP62A).